The following is a 222-amino-acid chain: UPF0758 protein Lcho_0695 (222 aa).

Residues 100-222 (VFDSPQAVRD…VVSFAERGLL (123 aa)) form the MPN domain. Zn(2+) is bound by residues His-171, His-173, and Asp-184. The JAMM motif motif lies at 171 to 184 (HNHPSGVAEPSRAD).

This sequence belongs to the UPF0758 family.

This Leptothrix cholodnii (strain ATCC 51168 / LMG 8142 / SP-6) (Leptothrix discophora (strain SP-6)) protein is UPF0758 protein Lcho_0695.